A 205-amino-acid chain; its full sequence is Nucleoside triphosphate pyrophosphatase (205 aa).

Aspartate 76 functions as the Proton acceptor in the catalytic mechanism.

It belongs to the Maf family. Requires a divalent metal cation as cofactor.

It is found in the cytoplasm. It catalyses the reaction a ribonucleoside 5'-triphosphate + H2O = a ribonucleoside 5'-phosphate + diphosphate + H(+). The enzyme catalyses a 2'-deoxyribonucleoside 5'-triphosphate + H2O = a 2'-deoxyribonucleoside 5'-phosphate + diphosphate + H(+). Nucleoside triphosphate pyrophosphatase. May have a dual role in cell division arrest and in preventing the incorporation of modified nucleotides into cellular nucleic acids. This chain is Nucleoside triphosphate pyrophosphatase, found in Orientia tsutsugamushi (strain Boryong) (Rickettsia tsutsugamushi).